Consider the following 263-residue polypeptide: Tryptophan synthase alpha chain (263 aa).

Residues E47 and D58 each act as proton acceptor in the active site.

It belongs to the TrpA family. Tetramer of two alpha and two beta chains.

Its subcellular location is the plastid. It is found in the chloroplast. The catalysed reaction is (1S,2R)-1-C-(indol-3-yl)glycerol 3-phosphate + L-serine = D-glyceraldehyde 3-phosphate + L-tryptophan + H2O. Its pathway is amino-acid biosynthesis; L-tryptophan biosynthesis; L-tryptophan from chorismate: step 5/5. The alpha subunit is responsible for the aldol cleavage of indoleglycerol phosphate to indole and glyceraldehyde 3-phosphate. In Pyropia yezoensis (Susabi-nori), this protein is Tryptophan synthase alpha chain.